The primary structure comprises 441 residues: tRNA(Ile)-lysidine synthase (441 aa).

S28–S33 contributes to the ATP binding site.

Belongs to the tRNA(Ile)-lysidine synthase family.

Its subcellular location is the cytoplasm. The enzyme catalyses cytidine(34) in tRNA(Ile2) + L-lysine + ATP = lysidine(34) in tRNA(Ile2) + AMP + diphosphate + H(+). Ligates lysine onto the cytidine present at position 34 of the AUA codon-specific tRNA(Ile) that contains the anticodon CAU, in an ATP-dependent manner. Cytidine is converted to lysidine, thus changing the amino acid specificity of the tRNA from methionine to isoleucine. The polypeptide is tRNA(Ile)-lysidine synthase (Orientia tsutsugamushi (strain Boryong) (Rickettsia tsutsugamushi)).